Consider the following 143-residue polypeptide: Large ribosomal subunit protein uL15 (143 aa).

Residues 1–45 (MLLNTVQPGVGAKHAKRRVGRGIGSGLGKTCGRGHKGQKSRAGGF) are disordered. A compositionally biased stretch (gly residues) spans 21–31 (RGIGSGLGKTC).

It belongs to the universal ribosomal protein uL15 family. Part of the 50S ribosomal subunit.

In terms of biological role, binds to the 23S rRNA. The polypeptide is Large ribosomal subunit protein uL15 (Chromobacterium violaceum (strain ATCC 12472 / DSM 30191 / JCM 1249 / CCUG 213 / NBRC 12614 / NCIMB 9131 / NCTC 9757 / MK)).